Consider the following 318-residue polypeptide: Small ribosomal subunit biogenesis GTPase RsgA (318 aa).

A CP-type G domain is found at 82 to 246 (RQDEIRTKSF…LIDSPGFQEF (165 aa)). GTP-binding positions include 132-135 (NKSD) and 186-194 (GPSGAGKST). Zn(2+) is bound by residues Cys-270, Cys-275, His-277, and Cys-283.

The protein belongs to the TRAFAC class YlqF/YawG GTPase family. RsgA subfamily. As to quaternary structure, monomer. Associates with 30S ribosomal subunit, binds 16S rRNA. Zn(2+) is required as a cofactor.

The protein resides in the cytoplasm. Its function is as follows. One of several proteins that assist in the late maturation steps of the functional core of the 30S ribosomal subunit. Helps release RbfA from mature subunits. May play a role in the assembly of ribosomal proteins into the subunit. Circularly permuted GTPase that catalyzes slow GTP hydrolysis, GTPase activity is stimulated by the 30S ribosomal subunit. The sequence is that of Small ribosomal subunit biogenesis GTPase RsgA from Variovorax paradoxus (strain S110).